Here is an 87-residue protein sequence, read N- to C-terminus: Alpha-elapitoxin-Ls2a (87 aa).

Positions 1 to 21 (MKTLLLTLVVVTIVCLDLGYT) are cleaved as a signal peptide. 5 cysteine pairs are disulfide-bonded: cysteine 24-cysteine 41, cysteine 34-cysteine 62, cysteine 47-cysteine 51, cysteine 66-cysteine 77, and cysteine 78-cysteine 83.

The protein belongs to the three-finger toxin family. Long-chain subfamily. Type II alpha-neurotoxin sub-subfamily. In terms of tissue distribution, expressed by the venom gland.

Its subcellular location is the secreted. Its function is as follows. Binds with high affinity to muscular (tested on Torpedo marmorata, Kd=1.6 nM) and neuronal (chimeric alpha-7/CHRNA7, Kd=3 nM) nicotinic acetylcholine receptor (nAChR) and inhibits acetylcholine from binding to the receptor, thereby impairing neuromuscular and neuronal transmission. Also shows a very weak inhibition on GABA(A) receptors. The toxin (10 uM) inhibits 83% of current in channels composed of alpha-1-beta-3-gamma-2 (GABRA1-GABRB3-GABRG2) subunits, 39% of current in channels composed of alpha-2-beta-2-gamma-2 (GABRA2-GABRB2-GABRG2) subunits, and 33% of current in channels composed of alpha-5-beta-2-gamma-2 (GABRA5-GABRB2-GABRG2) subunits. In Laticauda semifasciata (Black-banded sea krait), this protein is Alpha-elapitoxin-Ls2a.